The following is a 772-amino-acid chain: Phosphatidylinositol 4-phosphate 5-kinase 5 (772 aa).

The disordered stretch occupies residues 22-56; the sequence is AKKRANSVFGTVSVAPHTDNDTTTDDNDDETTTNR. Residues 43 to 52 show a composition bias toward acidic residues; the sequence is TTTDDNDDET. MORN repeat units follow at residues 75-97, 98-120, 121-143, 144-166, 167-189, 190-212, 213-235, and 236-257; these read YTGQWYDSFPHGHGKYLWTDGCM, YIGDWYNGKTMGNGKFGWPSGAT, YEGEFKSGYMDGIGTYTGPSGDA, YKGQWVMNLKHGHGVKSFANGDA, YDGEWRRGLQEGQGKYQWSDGSY, YIGEWKNGTICGKGSFVWTNGNR, YDGFWDEGFPRGNGTFKWDNGSF, and YVGHWSKDPEEMNGTYYPSGNE. A PIPK domain is found at 377 to 768; sequence SKGHRNYELM…RFRDFIFKVF (392 aa). Residues 646–665 form a disordered region; the sequence is SGARTPIGESEEESGPRLSR. An activation loop region spans residues 728 to 749; the sequence is YDISKKLEHAYKSIQYDPSSIS.

The enzyme catalyses a 1,2-diacyl-sn-glycero-3-phospho-(1D-myo-inositol 4-phosphate) + ATP = a 1,2-diacyl-sn-glycero-3-phospho-(1D-myo-inositol-4,5-bisphosphate) + ADP + H(+). This chain is Phosphatidylinositol 4-phosphate 5-kinase 5 (PIP5K5), found in Arabidopsis thaliana (Mouse-ear cress).